The primary structure comprises 329 residues: 4-hydroxythreonine-4-phosphate dehydrogenase (329 aa).

2 residues coordinate substrate: histidine 136 and threonine 137. A divalent metal cation is bound by residues histidine 166, histidine 211, and histidine 266. Substrate contacts are provided by lysine 274, asparagine 283, and arginine 292.

It belongs to the PdxA family. In terms of assembly, homodimer. Requires Zn(2+) as cofactor. Mg(2+) is required as a cofactor. It depends on Co(2+) as a cofactor.

It is found in the cytoplasm. It catalyses the reaction 4-(phosphooxy)-L-threonine + NAD(+) = 3-amino-2-oxopropyl phosphate + CO2 + NADH. Its pathway is cofactor biosynthesis; pyridoxine 5'-phosphate biosynthesis; pyridoxine 5'-phosphate from D-erythrose 4-phosphate: step 4/5. Catalyzes the NAD(P)-dependent oxidation of 4-(phosphooxy)-L-threonine (HTP) into 2-amino-3-oxo-4-(phosphooxy)butyric acid which spontaneously decarboxylates to form 3-amino-2-oxopropyl phosphate (AHAP). In Escherichia coli O6:H1 (strain CFT073 / ATCC 700928 / UPEC), this protein is 4-hydroxythreonine-4-phosphate dehydrogenase.